Consider the following 262-residue polypeptide: uncharacterized protein (262 aa).

This sequence belongs to the BtpA family.

This is an uncharacterized protein from Pyrococcus furiosus (strain ATCC 43587 / DSM 3638 / JCM 8422 / Vc1).